The chain runs to 147 residues: Mid1-interacting protein 1-B (147 aa).

Belongs to the SPOT14 family.

It localises to the nucleus. The protein resides in the cytoplasm. The protein localises to the cytoskeleton. Its function is as follows. Involved in stabilization of microtubules. May play a role in the regulation of lipogenesis. The protein is Mid1-interacting protein 1-B of Danio rerio (Zebrafish).